Here is a 157-residue protein sequence, read N- to C-terminus: DNA gyrase inhibitor (157 aa).

Belongs to the DNA gyrase inhibitor family. In terms of assembly, interacts with DNA gyrase.

Its subcellular location is the cytoplasm. Functionally, inhibits the supercoiling activity of DNA gyrase. Acts by inhibiting DNA gyrase at an early step, prior to (or at the step of) binding of DNA by the gyrase. It protects cells against toxins that target DNA gyrase, by inhibiting activity of these toxins and reducing the formation of lethal double-strand breaks in the cell. This is DNA gyrase inhibitor from Yersinia enterocolitica serotype O:8 / biotype 1B (strain NCTC 13174 / 8081).